The chain runs to 322 residues: tRNA-dihydrouridine synthase B (322 aa).

Residues 16-18 (PMA) and Q70 each bind FMN. Catalysis depends on C100, which acts as the Proton donor. Residues K139, 200–202 (NGD), and 224–225 (GR) each bind FMN.

The protein belongs to the Dus family. DusB subfamily. It depends on FMN as a cofactor.

It carries out the reaction a 5,6-dihydrouridine in tRNA + NAD(+) = a uridine in tRNA + NADH + H(+). The catalysed reaction is a 5,6-dihydrouridine in tRNA + NADP(+) = a uridine in tRNA + NADPH + H(+). Its function is as follows. Catalyzes the synthesis of 5,6-dihydrouridine (D), a modified base found in the D-loop of most tRNAs, via the reduction of the C5-C6 double bond in target uridines. The protein is tRNA-dihydrouridine synthase B of Vibrio cholerae serotype O1 (strain ATCC 39315 / El Tor Inaba N16961).